Consider the following 1023-residue polypeptide: Rho GTPase-activating protein 11A (1023 aa).

Residues 49–239 form the Rho-GAP domain; it reads VPFNALPHSA…TLIDYASDIG (191 aa). Phosphoserine is present on S285. The residue at position 306 (T306) is a Phosphothreonine. 2 positions are modified to phosphoserine: S316 and S318. T323 is modified (phosphothreonine). Phosphoserine is present on residues S339, S340, and S484. T508 is modified (phosphothreonine). The disordered stretch occupies residues 567 to 589; sequence TPSNLNNKHNSNITSSPLSGDEN. 4 positions are modified to phosphoserine: S582, S585, S638, and S675. The tract at residues 714 to 734 is disordered; sequence KQEFSSDEEIKKQQSPKDKLN. Over residues 721 to 734 the composition is skewed to basic and acidic residues; sequence EEIKKQQSPKDKLN. S847 carries the phosphoserine modification. T866 carries the phosphothreonine modification. S868 is modified (phosphoserine). The interval 999–1023 is disordered; sequence AWYKGSPKHPIGKTQLLPTSKPVDL.

The protein resides in the nucleus. GTPase activator for the Rho-type GTPases by converting them to an inactive GDP-bound state. This is Rho GTPase-activating protein 11A from Homo sapiens (Human).